Here is a 699-residue protein sequence, read N- to C-terminus: Macoilin-2 (699 aa).

Helical transmembrane passes span 28-48 (TFLYLKFLVVWALVLLADFVL), 75-95 (AFSVFFVCVAFTSDIICLLFI), 120-140 (VCLPTVSLWILFVYIEAAIRF), and 154-174 (FAAHCIGYPVVTLGFGFKSYV). 4 disordered regions span residues 219–289 (AAAA…SILP), 322–411 (LLKD…PNNQ), 432–451 (LQASRQTEQDLRSQLGSLGT), and 679–699 (FMDTSPSGLDPNASVYQPLKK). N-linked (GlcNAc...) asparagine glycosylation is found at asparagine 241, asparagine 267, asparagine 345, and asparagine 365. The span at 257 to 271 (LEYREKERGKNESKK) shows a compositional bias: basic and acidic residues. Over residues 329-346 (SSSSSSTSSNSNKNYKNA) the composition is skewed to low complexity. Over residues 366–382 (GSVPSSSGPSSSASSSS) the composition is skewed to low complexity. An N-linked (GlcNAc...) asparagine glycan is attached at asparagine 690.

The protein belongs to the macoilin family.

It localises to the nucleus membrane. The protein resides in the cell projection. It is found in the axon. Its subcellular location is the rough endoplasmic reticulum membrane. Its function is as follows. May play a role in the regulation of neuronal activity. The protein is Macoilin-2 of Danio rerio (Zebrafish).